The primary structure comprises 236 residues: Phosphoribosylaminoimidazole-succinocarboxamide synthase (236 aa).

This sequence belongs to the SAICAR synthetase family.

It catalyses the reaction 5-amino-1-(5-phospho-D-ribosyl)imidazole-4-carboxylate + L-aspartate + ATP = (2S)-2-[5-amino-1-(5-phospho-beta-D-ribosyl)imidazole-4-carboxamido]succinate + ADP + phosphate + 2 H(+). The protein operates within purine metabolism; IMP biosynthesis via de novo pathway; 5-amino-1-(5-phospho-D-ribosyl)imidazole-4-carboxamide from 5-amino-1-(5-phospho-D-ribosyl)imidazole-4-carboxylate: step 1/2. This is Phosphoribosylaminoimidazole-succinocarboxamide synthase from Cellvibrio japonicus (strain Ueda107) (Pseudomonas fluorescens subsp. cellulosa).